The sequence spans 159 residues: Cytochrome c-type biogenesis protein CcmE (159 aa).

The Cytoplasmic segment spans residues 1 to 23; it reads MSSQSFHNSPSLRVILKQRKKKR. Residues 24 to 44 form a helical; Signal-anchor for type II membrane protein membrane-spanning segment; it reads LLIVLFCCLIIAIATSLITYA. Topologically, residues 45-159 are periplasmic; it reads LRNTVSFFRM…RLNKHHRVEK (115 aa). The heme site is built by histidine 138 and tyrosine 142.

It belongs to the CcmE/CycJ family.

Its subcellular location is the cell inner membrane. Its function is as follows. Heme chaperone required for the biogenesis of c-type cytochromes. Transiently binds heme delivered by CcmC and transfers the heme to apo-cytochromes in a process facilitated by CcmF and CcmH. The polypeptide is Cytochrome c-type biogenesis protein CcmE (Bartonella henselae (strain ATCC 49882 / DSM 28221 / CCUG 30454 / Houston 1) (Rochalimaea henselae)).